The primary structure comprises 274 residues: Large ribosomal subunit protein uL2 (274 aa).

The disordered stretch occupies residues 221-254 (RGTAMNPADHPHGGGEGRTFGKHPVSPWGLPTKG).

Belongs to the universal ribosomal protein uL2 family. As to quaternary structure, part of the 50S ribosomal subunit. Forms a bridge to the 30S subunit in the 70S ribosome.

Its function is as follows. One of the primary rRNA binding proteins. Required for association of the 30S and 50S subunits to form the 70S ribosome, for tRNA binding and peptide bond formation. It has been suggested to have peptidyltransferase activity; this is somewhat controversial. Makes several contacts with the 16S rRNA in the 70S ribosome. In Sulfurihydrogenibium sp. (strain YO3AOP1), this protein is Large ribosomal subunit protein uL2.